The following is a 199-amino-acid chain: B3 domain-containing protein Os06g0107800 (199 aa).

The segment at 13 to 32 (QLQGGGGGHGGGGGGGGGER) is disordered. Positions 15–29 (QGGGGGHGGGGGGGG) are enriched in gly residues. The segment at residues 37 to 141 (FEKVVTPSDV…RLFIDCRKRA (105 aa)) is a DNA-binding region (TF-B3).

It is found in the nucleus. This chain is B3 domain-containing protein Os06g0107800, found in Oryza sativa subsp. japonica (Rice).